The sequence spans 243 residues: tRNA1(Val) (adenine(37)-N6)-methyltransferase (243 aa).

The protein belongs to the methyltransferase superfamily. tRNA (adenine-N(6)-)-methyltransferase family.

The protein resides in the cytoplasm. It catalyses the reaction adenosine(37) in tRNA1(Val) + S-adenosyl-L-methionine = N(6)-methyladenosine(37) in tRNA1(Val) + S-adenosyl-L-homocysteine + H(+). In terms of biological role, specifically methylates the adenine in position 37 of tRNA(1)(Val) (anticodon cmo5UAC). The sequence is that of tRNA1(Val) (adenine(37)-N6)-methyltransferase from Shewanella loihica (strain ATCC BAA-1088 / PV-4).